The following is a 539-amino-acid chain: Chaperonin GroEL 1 (539 aa).

ATP contacts are provided by residues 29–32, 86–90, Gly-413, and Asp-493; these read TLGP and DGTTT.

Belongs to the chaperonin (HSP60) family. In terms of assembly, forms a cylinder of 14 subunits composed of two heptameric rings stacked back-to-back. Interacts with the co-chaperonin GroES.

The protein resides in the cytoplasm. It carries out the reaction ATP + H2O + a folded polypeptide = ADP + phosphate + an unfolded polypeptide.. Together with its co-chaperonin GroES, plays an essential role in assisting protein folding. The GroEL-GroES system forms a nano-cage that allows encapsulation of the non-native substrate proteins and provides a physical environment optimized to promote and accelerate protein folding. The polypeptide is Chaperonin GroEL 1 (Acidothermus cellulolyticus (strain ATCC 43068 / DSM 8971 / 11B)).